Reading from the N-terminus, the 498-residue chain is Glycerol kinase (498 aa).

Threonine 12 contacts ADP. Positions 12, 13, and 14 each coordinate ATP. Position 12 (threonine 12) interacts with sn-glycerol 3-phosphate. Arginine 16 lines the ADP pocket. Sn-glycerol 3-phosphate-binding residues include arginine 82, glutamate 83, tyrosine 134, and aspartate 241. Residues arginine 82, glutamate 83, tyrosine 134, aspartate 241, and glutamine 242 each contribute to the glycerol site. ADP-binding residues include threonine 263 and glycine 310. Threonine 263, glycine 310, glutamine 314, and glycine 411 together coordinate ATP. ADP is bound by residues glycine 411 and asparagine 415.

The protein belongs to the FGGY kinase family.

The enzyme catalyses glycerol + ATP = sn-glycerol 3-phosphate + ADP + H(+). It functions in the pathway polyol metabolism; glycerol degradation via glycerol kinase pathway; sn-glycerol 3-phosphate from glycerol: step 1/1. Inhibited by fructose 1,6-bisphosphate (FBP). In terms of biological role, key enzyme in the regulation of glycerol uptake and metabolism. Catalyzes the phosphorylation of glycerol to yield sn-glycerol 3-phosphate. In Janthinobacterium sp. (strain Marseille) (Minibacterium massiliensis), this protein is Glycerol kinase.